The sequence spans 162 residues: MGLETEKADVQLFMDDDSYSHHSGLEYADPEKFADSGQDRDPHRLNSHLKLGFEDVIAEPVTTHSFDKVWICSHALFEISKYVMYKFLTVFLAIPLAFIAGILFATLSCLHIWILMPFVKTCLMVLPSVQTIWKSVTDVFIAPLCTSVGRSFSSVSLQLSQD.

At 1–86 (MGLETEKADV…FEISKYVMYK (86 aa)) the chain is on the cytoplasmic side. The residue at position 19 (Tyr-19) is a Phosphotyrosine; by SRC. Phosphoserine occurs at positions 20 and 23. A Phosphotyrosine; by SRC modification is found at Tyr-27. Residue Ser-36 is modified to Phosphoserine. Positions 87–107 (FLTVFLAIPLAFIAGILFATL) form an intramembrane region, helical. Topologically, residues 108–162 (SCLHIWILMPFVKTCLMVLPSVQTIWKSVTDVFIAPLCTSVGRSFSSVSLQLSQD) are cytoplasmic.

Belongs to the caveolin family. Monomer or homodimer. Interacts with CAV1; the interaction forms a stable heterooligomeric complex that is required for targeting to lipid rafts and for caveolae formation. Tyrosine phosphorylated forms do not form heterooligomers with the Tyr-19-phosphorylated form existing as a monomer or dimer, and the Tyr-27-form as a monomer only. Interacts (tyrosine phosphorylated form) with the SH2 domain-containing proteins, RASA1, NCK1 and SRC. Interacts (tyrosine phosphorylated form) with INSR, the interaction (Tyr-27-phosphorylated form) is increased on insulin stimulation. Interacts (Tyr-19 phosphorylated form) with MAPK1 (phosphorylated form); the interaction, promoted by insulin, leads to nuclear location and MAPK1 activation. Interacts with STAT3; the interaction is increased on insulin-induced tyrosine phosphorylation leading to STAT activation. In terms of processing, phosphorylated on serine and tyrosine residues. CAV1 promotes phosphorylation on Ser-23 which then targets the complex to the plasma membrane, lipid rafts and caveolae. Phosphorylation on Ser-36 appears to modulate mitosis in endothelial cells. Phosphorylation on both Tyr-19 and Tyr-27 is required for insulin-induced 'Ser-727' phosphorylation of STAT3 and its activation. Phosphorylation on Tyr-19 is required for insulin-induced phosphorylation of MAPK1 and DNA binding of STAT3. Tyrosine phosphorylation is induced by both EGF and insulin (By. similarity).

It localises to the nucleus. The protein resides in the cytoplasm. Its subcellular location is the golgi apparatus membrane. The protein localises to the cell membrane. It is found in the membrane. It localises to the caveola. Its function is as follows. May act as a scaffolding protein within caveolar membranes. Interacts directly with G-protein alpha subunits and can functionally regulate their activity. Acts as an accessory protein in conjunction with CAV1 in targeting to lipid rafts and driving caveolae formation. The Ser-36 phosphorylated form has a role in modulating mitosis in endothelial cells. Positive regulator of cellular mitogenesis of the MAPK signaling pathway. Required for the insulin-stimulated nuclear translocation and activation of MAPK1 and STAT3, and the subsequent regulation of cell cycle progression. This Chlorocebus aethiops (Green monkey) protein is Caveolin-2 (CAV2).